Reading from the N-terminus, the 107-residue chain is NADH-quinone oxidoreductase subunit K (107 aa).

3 consecutive transmembrane segments (helical) span residues 11–31 (LTHY…GVLL), 36–56 (IVLL…FVAF), and 67–87 (IMVF…LALA).

This sequence belongs to the complex I subunit 4L family. NDH-1 is composed of 14 different subunits. Subunits NuoA, H, J, K, L, M, N constitute the membrane sector of the complex.

It localises to the cell inner membrane. The enzyme catalyses a quinone + NADH + 5 H(+)(in) = a quinol + NAD(+) + 4 H(+)(out). NDH-1 shuttles electrons from NADH, via FMN and iron-sulfur (Fe-S) centers, to quinones in the respiratory chain. The immediate electron acceptor for the enzyme in this species is believed to be ubiquinone. Couples the redox reaction to proton translocation (for every two electrons transferred, four hydrogen ions are translocated across the cytoplasmic membrane), and thus conserves the redox energy in a proton gradient. The chain is NADH-quinone oxidoreductase subunit K from Bdellovibrio bacteriovorus (strain ATCC 15356 / DSM 50701 / NCIMB 9529 / HD100).